The primary structure comprises 41 residues: Large ribosomal subunit protein bL36 (41 aa).

Positions Met1–Arg21 are disordered.

This sequence belongs to the bacterial ribosomal protein bL36 family.

The chain is Large ribosomal subunit protein bL36 from Methylobacterium sp. (strain 4-46).